Consider the following 409-residue polypeptide: DEP domain-containing mTOR-interacting protein (409 aa).

Methionine 1 is modified (N-acetylmethionine). Residues 1-10 (MEEGSSGGSG) are compositionally biased toward gly residues. Residues 1–23 (MEEGSSGGSGSSDSNAGGSGGVQ) form a disordered region. 2 DEP domains span residues 36-119 (TGEQ…RFRK) and 146-219 (PETT…QFRM). The DDEX motif motif lies at 217–235 (FRMNFRRRRRLMELLNETS). Serine 235 is modified (phosphoserine). The residue at position 241 (threonine 241) is a Phosphothreonine. Phosphoserine occurs at positions 244 and 258. Position 259 is a phosphothreonine (threonine 259). A phosphoserine mark is found at serine 263, serine 265, serine 280, serine 282, serine 283, serine 286, and serine 287. A BetaTrCP degron motif motif is present at residues 286–291 (SSGYFS). The residue at position 289 (tyrosine 289) is a Phosphotyrosine. Phosphoserine is present on residues serine 291 and serine 293. Threonine 295 bears the Phosphothreonine mark. 3 positions are modified to phosphoserine: serine 297, serine 298, and serine 299. Positions 330-407 (TFTIVGDAVG…TIVMEVMEEL (78 aa)) constitute a PDZ domain.

Associated component of the mechanistic target of rapamycin complex 1 (mTORC1) which contains MTOR, MLST8 and RPTOR. Associated component of the mechanistic target of rapamycin complex 2 (mTORC2) which contains MTOR, MLST8, PROTOR1, RICTOR, MAPKAP1 and DEPTOR. Interacts (via PDZ domain) with MTOR; interacts with MTOR within both mTORC1 and mTORC2. Interacts (via PDZ domain) with MINAR1 (via N-terminus). Interacts with SIK3. Phosphorylation weakens interaction with MTOR within mTORC1 and mTORC2. Phosphorylated at Ser-286, Ser-287 and Ser-291 in response to mitogenic stimulation by MTOR: DEPTOR is either directly phosphorylated by MTOR or indirectly via proteins kinases that are activated by MTOR, such as CK1/CSNK1A1. Phosphorylation at Ser-286, Ser-287 and Ser-291 promotes ubiquitination by the SCF(BTRC) complex, followed by degradation. Phosphorylation at Ser-235 by MAPK3/ERK1 promotes deubiquitination by USP7, enhancing its stability. Phosphorylation at Tyr-291 by SYK impairs its interaction with MTOR, promoting mTORC1 and mTORC2 signaling. Post-translationally, ubiquitinated; leading to proteasomal degradation. Ubiquitination by the SCF(BTRC) and SCF(FBXW11) complexes following phosphorylation at Ser-286, Ser-287 and Ser-291 by MTOR, leads to its degradation by the proteasome. Deubiquitinated by OTUB1 in response to amino acid via a non-canonical mechanism, leading to DEPTOR stability. Deubiquitinated by USP7 following phosphorylation at Ser-235, promoting its stability.

The protein resides in the lysosome membrane. Inhibited upon phosphatidic acid-binding: phosphatidic acid produced upon mitogenic stimulation promotes DEPTOR dissociatiom from the mTORC1 and mTORC2 complexes, leading to their activation. Specifically binds unsaturated phosphatidic acid, such as 16:0-18:1, 18:0-18:1 and di-18:1. Inhibited when nutrients are present via a feedback loop: phosphorylation by MTOR promotes DEPTOR ubiquitination and degradation. Functionally, negative regulator of the mTORC1 and mTORC2 complexes: inhibits the protein kinase activity of MTOR, thereby inactivating both complexes. DEPTOR inhibits mTORC1 and mTORC2 to induce autophagy. In contrast to AKT1S1/PRAS40, only partially inhibits mTORC1 activity. The sequence is that of DEP domain-containing mTOR-interacting protein from Mus musculus (Mouse).